The following is a 165-amino-acid chain: Neurotrophin-3 (165 aa).

The first 3 residues, 1–3 (IQS), serve as a signal peptide directing secretion. Positions 4-119 (TSMDQGSLSE…VLNQTSRRKR (116 aa)) are excised as a propeptide. Residue asparagine 112 is glycosylated (N-linked (GlcNAc...) asparagine).

Belongs to the NGF-beta family.

The protein localises to the secreted. Seems to promote the survival of visceral and proprioceptive sensory neurons. The polypeptide is Neurotrophin-3 (NTF3) (Aspidites melanocephalus (Black-headed python)).